Here is a 367-residue protein sequence, read N- to C-terminus: MFGQQQQQQPPPPAASAYLNHNSRWTPPNESAQPRRSSNAMDINAITDRDPAEGHPRSNHTSSSIGSPIDKSPETYPGHEENGRIYHGFRRGIYFLPCDDLEQDRLDIFHKVITVARVSDALIYSPHPRNGRFLDLGCGTGIWAIDVAQKYPDAFVVGVDLSPIQPLNSPRNCDFYAPFDFESPWALGEDSWDLIHMQLGCGSVVSWPSLYRRIFAHLRPGAWFEQVEIDFEPRCDDRSLEGLALHHWYQCLKQATEEAMRPLAHNPRETIRHLQEAGFTEIDHQIVGLPLNPWHQDEHEKTVARWYNLAICESIETFSLAPFTRFFGWPVDRIKRLVADVRSEAFNKDIHAYNILHIYQARKPISN.

Residues 1-82 (MFGQQQQQQP…PETYPGHEEN (82 aa)) form a disordered region. The segment covering 19–41 (LNHNSRWTPPNESAQPRRSSNAM) has biased composition (polar residues). 2 stretches are compositionally biased toward basic and acidic residues: residues 47-56 (TDRDPAEGHP) and 71-82 (KSPETYPGHEEN).

This sequence belongs to the methyltransferase superfamily. LaeA methyltransferase family. As to quaternary structure, component of the heterotrimeric velvet complex composed of laeA, veA and velB; VeA acting as a bridging protein between laeA and velB.

Its subcellular location is the nucleus. It catalyses the reaction L-methionyl-[protein] + S-adenosyl-L-methionine = S-methyl-L-methionyl-[protein] + S-adenosyl-L-homocysteine. In terms of biological role, methyltransferase that performs automethylation. No other methyl-accepting substrate has been identified yet. Component of the velvet transcription factor complex that acts as a global regulator for secondary metabolite gene expression. Controls the expression of the monacolin K gene clusters. Also regulates pigmentation. This Monascus pilosus (Red mold) protein is Secondary metabolism regulator laeA.